Here is a 231-residue protein sequence, read N- to C-terminus: Adenosylcobinamide-GDP ribazoletransferase (231 aa).

Transmembrane regions (helical) follow at residues 29 to 49 (ICAY…SMKL), 53 to 73 (NFLW…LFHF), 101 to 121 (IGPF…YAFL), 126 to 146 (IDLI…LHFG), 167 to 187 (LISL…IISL), and 211 to 231 (DVLG…LSLI).

The protein belongs to the CobS family. The cofactor is Mg(2+).

It is found in the cell inner membrane. It carries out the reaction alpha-ribazole + adenosylcob(III)inamide-GDP = adenosylcob(III)alamin + GMP + H(+). It catalyses the reaction alpha-ribazole 5'-phosphate + adenosylcob(III)inamide-GDP = adenosylcob(III)alamin 5'-phosphate + GMP + H(+). It functions in the pathway cofactor biosynthesis; adenosylcobalamin biosynthesis; adenosylcobalamin from cob(II)yrinate a,c-diamide: step 7/7. Its function is as follows. Joins adenosylcobinamide-GDP and alpha-ribazole to generate adenosylcobalamin (Ado-cobalamin). Also synthesizes adenosylcobalamin 5'-phosphate from adenosylcobinamide-GDP and alpha-ribazole 5'-phosphate. The protein is Adenosylcobinamide-GDP ribazoletransferase of Kosmotoga olearia (strain ATCC BAA-1733 / DSM 21960 / TBF 19.5.1).